Reading from the N-terminus, the 367-residue chain is Ribosomal lysine N-methyltransferase 5 (367 aa).

The interval 55-74 (EGGRKKKRVRRRNKASSVEE) is disordered. Residues 58–68 (RKKKRVRRRNK) show a composition bias toward basic residues. Residues Trp110, 170-172 (GAG), Asp192, Trp256, and Met288 each bind S-adenosyl-L-methionine.

Belongs to the class I-like SAM-binding methyltransferase superfamily. RKM5 family.

Its function is as follows. S-adenosyl-L-methionine-dependent protein-lysine N-methyltransferase that monomethylates 60S ribosomal protein L1 (RPL1A and RPL1B) at 'Lys-46'. The chain is Ribosomal lysine N-methyltransferase 5 (RKM5) from Saccharomyces cerevisiae (strain Lalvin EC1118 / Prise de mousse) (Baker's yeast).